A 132-amino-acid polypeptide reads, in one-letter code: Small ribosomal subunit protein uS8 (132 aa).

It belongs to the universal ribosomal protein uS8 family. In terms of assembly, part of the 30S ribosomal subunit. Contacts proteins S5 and S12.

One of the primary rRNA binding proteins, it binds directly to 16S rRNA central domain where it helps coordinate assembly of the platform of the 30S subunit. This Bartonella bacilliformis (strain ATCC 35685 / KC583 / Herrer 020/F12,63) protein is Small ribosomal subunit protein uS8.